A 576-amino-acid polypeptide reads, in one-letter code: 2-isopropylmalate synthase (576 aa).

One can recognise a Pyruvate carboxyltransferase domain in the interval 31 to 305; the sequence is PIWMSTDLRD…DPGLDFSHVN (275 aa). Mg(2+) is bound by residues Asp40, His244, His246, and Asn280. The interval 437–576 is regulatory domain; sequence ADGPIGYVSH…RGMAPSMELA (140 aa).

The protein belongs to the alpha-IPM synthase/homocitrate synthase family. LeuA type 2 subfamily. In terms of assembly, homodimer. It depends on Mg(2+) as a cofactor.

It is found in the cytoplasm. The enzyme catalyses 3-methyl-2-oxobutanoate + acetyl-CoA + H2O = (2S)-2-isopropylmalate + CoA + H(+). It participates in amino-acid biosynthesis; L-leucine biosynthesis; L-leucine from 3-methyl-2-oxobutanoate: step 1/4. In terms of biological role, catalyzes the condensation of the acetyl group of acetyl-CoA with 3-methyl-2-oxobutanoate (2-ketoisovalerate) to form 3-carboxy-3-hydroxy-4-methylpentanoate (2-isopropylmalate). The protein is 2-isopropylmalate synthase of Ralstonia nicotianae (strain ATCC BAA-1114 / GMI1000) (Ralstonia solanacearum).